An 855-amino-acid chain; its full sequence is MICAL-like protein 1 (855 aa).

Residues 2–108 enclose the Calponin-homology (CH) domain; it reads AGPRGALLAW…YVSQYYNHFT (107 aa). Disordered stretches follow at residues 110-165, 226-253, and 269-659; these read SGQA…SSAC, GRSG…EDSD, and QASS…HGFP. Over residues 124 to 135 the composition is skewed to low complexity; the sequence is PAAPSPTSTSPA. Residues 163–226 form the LIM zinc-binding domain; it reads SACAACGQRV…ERCTRLGLGG (64 aa). The span at 269–278 shows a compositional bias: polar residues; sequence QASSEVQPHT. Phosphoserine is present on residues serine 293 and serine 307. A compositionally biased stretch (polar residues) spans 308-325; that stretch reads ESSALTPPTPRPRSSLQQ. Phosphothreonine is present on residues threonine 313 and threonine 316. Over residues 356-367 the composition is skewed to basic and acidic residues; sequence LSERMTAPRKDP. The short motif at 423–425 is the NPF1 element; that stretch reads NPF. The segment covering 425–434 has biased composition (acidic residues); sequence FEEEEEEEEA. The span at 439-449 shows a compositional bias: pro residues; it reads VPSPAPAPPET. Residues threonine 461 and threonine 463 each carry the phosphothreonine modification. 4 positions are modified to phosphoserine: serine 464, serine 465, serine 478, and serine 480. Positions 499 to 514 are enriched in low complexity; that stretch reads PSPALSVESLSSESSS. Polar residues predominate over residues 542–554; that stretch reads PGTSANSVTPSAH. A compositionally biased stretch (low complexity) spans 555-570; the sequence is SSLSSSGELGQPSGEQ. Serine 613 bears the Phosphoserine mark. Residues 625 to 627 carry the NPF2 motif; the sequence is NPF. The mediates the interaction with RAB13 and intramolecular interaction with the calponin-homology (CH) domain stretch occupies residues 644–855; sequence KGAKPVRPPA…AKSKAPTGKS (212 aa). In terms of domain architecture, bMERB spans 663 to 810; that stretch reads RKVQADQYIP…EEEEDKMLET (148 aa). Residues 679–703 are a coiled coil; that stretch reads EMDSIERQLDALEHSGVLLEEKLRG. Phosphoserine is present on residues serine 682 and serine 732. Positions 692–855 are necessary and sufficient to associate with tubular recycling endosome membranes, mediate phosphatidic acid-binding and membrane tubulation; it reads HSGVLLEEKL…AKSKAPTGKS (164 aa). The stretch at 794–822 forms a coiled coil; sequence LDEDRQREEEEDKMLETMIKKKDFQREAE. A compositionally biased stretch (basic and acidic residues) spans 815–826; the sequence is KDFQREAESDSK. The tract at residues 815-855 is disordered; sequence KDFQREAESDSKKKGKFKTMKVLKLLGNKRDAKSKAPTGKS.

Homooligomer. Interacts (via NPF1 motif) with EHD1 (via EH domain); the interaction is direct and probably recruits EHD1 to membranes. Interacts with EHD3 (via EH domain). Interacts with RAB35 (GTP-bound form); the interaction is direct and probably recruits MICALL1 to membranes. Interacts with ACAP2; the interaction is indirect through RAB35. Interacts with RAB8A (GTP-bound form); regulates RAB8A association with recycling endosomes. Interacts with RAB13 (GTP-bound form). Interacts with ARF6 (GTP-bound form). Interacts with PACSIN2 (via the SH3 domain). Interacts with DPYSL2.

The protein localises to the recycling endosome membrane. It localises to the late endosome membrane. The protein resides in the cell projection. Its subcellular location is the cilium membrane. It is found in the cytoplasm. The protein localises to the cytoskeleton. It localises to the microtubule organizing center. The protein resides in the centrosome. Its subcellular location is the centriole. Functionally, lipid-binding protein with higher affinity for phosphatidic acid, a lipid enriched in recycling endosome membranes. On endosome membranes, acts as a downstream effector of Rab proteins recruiting cytosolic proteins to regulate membrane tubulation. Involved in a late step of receptor-mediated endocytosis regulating for instance endocytosed-EGF receptor trafficking. Alternatively, regulates slow endocytic recycling of endocytosed proteins back to the plasma membrane. Also involved in cargo protein delivery to the plasma membrane. Plays a role in ciliogenesis coordination, recruits EHD1 to primary cilium where it is anchored to the centriole through interaction with tubulins. May indirectly play a role in neurite outgrowth. The chain is MICAL-like protein 1 (Micall1) from Rattus norvegicus (Rat).